The primary structure comprises 351 residues: tRNA N6-adenosine threonylcarbamoyltransferase (351 aa).

Fe cation is bound by residues H111 and H115. Residues L134–G138, D167, G180, and N276 contribute to the substrate site. Residue D304 participates in Fe cation binding.

It belongs to the KAE1 / TsaD family. Requires Fe(2+) as cofactor.

It localises to the cytoplasm. The enzyme catalyses L-threonylcarbamoyladenylate + adenosine(37) in tRNA = N(6)-L-threonylcarbamoyladenosine(37) in tRNA + AMP + H(+). In terms of biological role, required for the formation of a threonylcarbamoyl group on adenosine at position 37 (t(6)A37) in tRNAs that read codons beginning with adenine. Is involved in the transfer of the threonylcarbamoyl moiety of threonylcarbamoyl-AMP (TC-AMP) to the N6 group of A37, together with TsaE and TsaB. TsaD likely plays a direct catalytic role in this reaction. This Marinobacter nauticus (strain ATCC 700491 / DSM 11845 / VT8) (Marinobacter aquaeolei) protein is tRNA N6-adenosine threonylcarbamoyltransferase.